Here is a 652-residue protein sequence, read N- to C-terminus: tRNA-guanine(15) transglycosylase (652 aa).

The active-site Nucleophile is Asp-88. Positions 123 and 194 each coordinate substrate. Zn(2+) contacts are provided by Cys-280, Cys-282, and Cys-285. Positions 577–652 (KYRVVIDSEV…AAVSVRSGFK (76 aa)) constitute a PUA domain.

It belongs to the archaeosine tRNA-ribosyltransferase family. Zn(2+) is required as a cofactor.

It catalyses the reaction guanosine(15) in tRNA + 7-cyano-7-deazaguanine = 7-cyano-7-carbaguanosine(15) in tRNA + guanine. Its pathway is tRNA modification; archaeosine-tRNA biosynthesis. Functionally, exchanges the guanine residue with 7-cyano-7-deazaguanine (preQ0) at position 15 in the dihydrouridine loop (D-loop) of archaeal tRNAs. The chain is tRNA-guanine(15) transglycosylase from Methanococcus aeolicus (strain ATCC BAA-1280 / DSM 17508 / OCM 812 / Nankai-3).